The sequence spans 89 residues: UPF0147 protein YN1551_1489 (89 aa).

It belongs to the UPF0147 family.

This is UPF0147 protein YN1551_1489 from Saccharolobus islandicus (strain Y.N.15.51 / Yellowstone #2) (Sulfolobus islandicus).